The primary structure comprises 115 residues: Large ribosomal subunit protein bL20c (115 aa).

The protein belongs to the bacterial ribosomal protein bL20 family.

It is found in the plastid. The protein resides in the chloroplast. Its function is as follows. Binds directly to 23S ribosomal RNA and is necessary for the in vitro assembly process of the 50S ribosomal subunit. It is not involved in the protein synthesizing functions of that subunit. This is Large ribosomal subunit protein bL20c from Gnetum parvifolium (Small-leaved jointfir).